We begin with the raw amino-acid sequence, 469 residues long: Glutamine synthetase (469 aa).

The 86-residue stretch at 14-99 (NDVKFVDLRF…VCDILDPVSG (86 aa)) folds into the GS beta-grasp domain. The 364-residue stretch at 106–469 (RRGTAKKAEA…PVEYDMYYSA (364 aa)) folds into the GS catalytic domain. Mg(2+)-binding residues include E131 and E133. Residue E209 coordinates ATP. Mg(2+) is bound by residues E214 and D221. L-glutamate is bound by residues 265-266 (NG) and G266. Position 270 (H270) interacts with Mg(2+). ATP is bound by residues 272–274 (HQS) and S274. R322, E328, and R340 together coordinate L-glutamate. The ATP site is built by R340, R345, and K353. E358 lines the Mg(2+) pocket. R360 serves as a coordination point for L-glutamate. At Y398 the chain carries O-AMP-tyrosine.

The protein belongs to the glutamine synthetase family. As to quaternary structure, oligomer of 12 subunits arranged in the form of two hexameric ring. It depends on Mg(2+) as a cofactor.

It localises to the cytoplasm. It carries out the reaction L-glutamate + NH4(+) + ATP = L-glutamine + ADP + phosphate + H(+). With respect to regulation, the activity of this enzyme could be controlled by adenylation under conditions of abundant glutamine. Functionally, catalyzes the ATP-dependent biosynthesis of glutamine from glutamate and ammonia. The chain is Glutamine synthetase from Rhizobium leguminosarum bv. viciae.